Consider the following 392-residue polypeptide: Phosphoglycerate kinase (392 aa).

Substrate is bound by residues 21 to 23, Arg36, 59 to 62, Arg114, and Arg147; these read DLN and HLGR. ATP-binding positions include Lys198, Glu320, and 346–349; that span reads GGDT.

This sequence belongs to the phosphoglycerate kinase family. Monomer.

The protein resides in the cytoplasm. The enzyme catalyses (2R)-3-phosphoglycerate + ATP = (2R)-3-phospho-glyceroyl phosphate + ADP. It participates in carbohydrate degradation; glycolysis; pyruvate from D-glyceraldehyde 3-phosphate: step 2/5. This is Phosphoglycerate kinase from Nitrosomonas eutropha (strain DSM 101675 / C91 / Nm57).